The following is a 436-amino-acid chain: Protein arginine methyltransferase NDUFAF7, mitochondrial (436 aa).

The N-terminal 41 residues, 1–41 (MNALVRRCVARTGIPSIWRRKCFSSGNEPAESNHVTPMLRH), are a transit peptide targeting the mitochondrion. The tract at residues 413 to 436 (QGGKACQSEAPSTSVPGFDELVWH) is disordered.

This sequence belongs to the NDUFAF7 family. Interacts with NDUFS2.

It localises to the mitochondrion. The catalysed reaction is L-arginyl-[protein] + 2 S-adenosyl-L-methionine = N(omega),N(omega)'-dimethyl-L-arginyl-[protein] + 2 S-adenosyl-L-homocysteine + 2 H(+). Arginine methyltransferase involved in the assembly or stability of mitochondrial NADH:ubiquinone oxidoreductase complex (complex I). Acts by mediating symmetric dimethylation of 'Arg-118' of NDUFS2 after it assembles into the complex I, stabilizing the early intermediate complex. This is Protein arginine methyltransferase NDUFAF7, mitochondrial from Rattus norvegicus (Rat).